Consider the following 212-residue polypeptide: 3-oxo-tetronate 4-phosphate decarboxylase (212 aa).

Glu79 (proton acceptor) is an active-site residue. Zn(2+)-binding residues include Glu79, His98, and His100. The Proton donor role is filled by Tyr125. A Zn(2+)-binding site is contributed by His165.

The protein belongs to the aldolase class II family. AraD/FucA subfamily. Requires Zn(2+) as cofactor.

It catalyses the reaction 3-dehydro-4-O-phospho-D-erythronate + H(+) = dihydroxyacetone phosphate + CO2. The catalysed reaction is 3-dehydro-4-O-phospho-L-erythronate + H(+) = dihydroxyacetone phosphate + CO2. In terms of biological role, catalyzes the decarboxylation of 3-oxo-tetronate 4-phosphate to dihydroxyacetone phosphate (DHAP) and CO(2). This Escherichia coli O6:H1 (strain CFT073 / ATCC 700928 / UPEC) protein is 3-oxo-tetronate 4-phosphate decarboxylase.